Consider the following 129-residue polypeptide: Small ribosomal subunit protein uS11 (129 aa).

This sequence belongs to the universal ribosomal protein uS11 family. Part of the 30S ribosomal subunit. Interacts with proteins S7 and S18. Binds to IF-3.

Functionally, located on the platform of the 30S subunit, it bridges several disparate RNA helices of the 16S rRNA. Forms part of the Shine-Dalgarno cleft in the 70S ribosome. The sequence is that of Small ribosomal subunit protein uS11 from Limosilactobacillus reuteri (strain DSM 20016) (Lactobacillus reuteri).